A 209-amino-acid polypeptide reads, in one-letter code: Ubiquitin-conjugating enzyme E2 S (209 aa).

Residues 14–160 (QTIRQVMREL…ARMMTEIHAQ (147 aa)) enclose the UBC core domain. Catalysis depends on Cys98, which acts as the Glycyl thioester intermediate. The segment at 165–194 (GVGAASDAKDDDGPSTKKHAGLDKKLQDKK) is disordered. Residues 171-194 (DAKDDDGPSTKKHAGLDKKLQDKK) show a composition bias toward basic and acidic residues.

It belongs to the ubiquitin-conjugating enzyme family.

It carries out the reaction S-ubiquitinyl-[E1 ubiquitin-activating enzyme]-L-cysteine + [E2 ubiquitin-conjugating enzyme]-L-cysteine = [E1 ubiquitin-activating enzyme]-L-cysteine + S-ubiquitinyl-[E2 ubiquitin-conjugating enzyme]-L-cysteine.. The protein operates within protein modification; protein ubiquitination. Catalyzes the covalent attachment of ubiquitin to other proteins. Acts as an essential factor of the anaphase promoting complex/cyclosome (APC/C), a cell cycle-regulated ubiquitin ligase that controls progression through mitosis. Acts by specifically elongating polyubiquitin chains initiated by the E2 enzyme vih/UbcH10 on APC/C substrates, enhancing the degradation of APC/C substrates by the proteasome and promoting mitotic exit. This chain is Ubiquitin-conjugating enzyme E2 S, found in Drosophila persimilis (Fruit fly).